Reading from the N-terminus, the 479-residue chain is Anaerobic nitric oxide reductase flavorubredoxin (479 aa).

The segment at 30–210 is zinc metallo-hydrolase; that stretch reads LRGSSYNSYL…PFSRLVTPKI (181 aa). Fe cation contacts are provided by H79, E81, D83, H147, D166, and H227. Residues 254–393 enclose the Flavodoxin-like domain; sequence ITIFYDTMSN…LCREHGREIA (140 aa). Residues 260–264 and 342–369 contribute to the FMN site; these read TMSNN and AFGS…EMSL. Residues 423-474 form the Rubredoxin-like domain; the sequence is GPRMQCSVCQWIYDPAKGEPMQDVAPGTPWSEVPDNFLCPECSLGKDVFDEL. The Fe cation site is built by C428, C431, C461, and C464.

It in the N-terminal section; belongs to the zinc metallo-hydrolase group 3 family. In terms of assembly, homotetramer. It depends on Fe cation as a cofactor. FMN serves as cofactor.

It localises to the cytoplasm. The protein operates within nitrogen metabolism; nitric oxide reduction. Its function is as follows. Anaerobic nitric oxide reductase; uses NADH to detoxify nitric oxide (NO), protecting several 4Fe-4S NO-sensitive enzymes. Has at least 2 reductase partners, only one of which (NorW, flavorubredoxin reductase) has been identified. NO probably binds to the di-iron center; electrons enter from the NorW at rubredoxin and are transferred sequentially to the FMN center and the di-iron center. Also able to function as an aerobic oxygen reductase. The chain is Anaerobic nitric oxide reductase flavorubredoxin from Shigella sonnei (strain Ss046).